The sequence spans 273 residues: Type IV secretion system protein PtlF (273 aa).

The N-terminal stretch at 1-20 is a signal peptide; it reads MMAARMMAAGLAATALSAHA.

The protein belongs to the TrbG/VirB9 family. As to quaternary structure, forms a complex with PtlI.

Its subcellular location is the cell outer membrane. In terms of biological role, component of the type IV secretion system ptl required for secretion of assembled pertussis toxin (PTX) through the outer membrane. This chain is Type IV secretion system protein PtlF (ptlF), found in Bordetella pertussis (strain Tohama I / ATCC BAA-589 / NCTC 13251).